The sequence spans 31 residues: Chassatide C6 (31 aa).

A cross-link (cyclopeptide (Gly-Asn)) is located at residues 1-31 (GVIPCGESCVFIPCISSVIGCSCKNKVCYRN). 3 disulfide bridges follow: Cys-5/Cys-21, Cys-9/Cys-23, and Cys-14/Cys-28.

In terms of processing, this is a cyclic peptide. Expressed in fruit, pedicel, root and stem but not in leaf (at protein level).

Its function is as follows. Probably participates in a plant defense mechanism. This Chassalia chartacea (Chassalia curviflora) protein is Chassatide C6.